We begin with the raw amino-acid sequence, 170 residues long: Probable phospholipid hydroperoxide glutathione peroxidase (170 aa).

Cys44 is an active-site residue.

It belongs to the glutathione peroxidase family.

The protein localises to the cytoplasm. It catalyses the reaction a hydroperoxy polyunsaturated fatty acid + 2 glutathione = a hydroxy polyunsaturated fatty acid + glutathione disulfide + H2O. Functionally, protects cells and enzymes from oxidative damage, by catalyzing the reduction of hydrogen peroxide, lipid peroxides and organic hydroperoxide, by glutathione. In Mesembryanthemum crystallinum (Common ice plant), this protein is Probable phospholipid hydroperoxide glutathione peroxidase (GPXMC1).